The sequence spans 456 residues: Kynurenine 3-monooxygenase (456 aa).

It belongs to the aromatic-ring hydroxylase family. KMO subfamily. Requires FAD as cofactor.

It carries out the reaction L-kynurenine + NADPH + O2 + H(+) = 3-hydroxy-L-kynurenine + NADP(+) + H2O. The protein operates within cofactor biosynthesis; NAD(+) biosynthesis; quinolinate from L-kynurenine: step 1/3. Functionally, catalyzes the hydroxylation of L-kynurenine (L-Kyn) to form 3-hydroxy-L-kynurenine (L-3OHKyn). Required for synthesis of quinolinic acid. The protein is Kynurenine 3-monooxygenase of Xanthomonas campestris pv. campestris (strain B100).